We begin with the raw amino-acid sequence, 319 residues long: Thioredoxin reductase (319 aa).

37–44 provides a ligand contact to FAD; sequence ERGVPGGQ. Residues cysteine 136 and cysteine 139 are joined by a disulfide bond. Residue 279 to 288 participates in FAD binding; sequence DVRAKSLRQI.

Belongs to the class-II pyridine nucleotide-disulfide oxidoreductase family. In terms of assembly, homodimer. FAD serves as cofactor.

It localises to the cytoplasm. It catalyses the reaction [thioredoxin]-dithiol + NADP(+) = [thioredoxin]-disulfide + NADPH + H(+). The protein is Thioredoxin reductase (trxB) of Listeria innocua serovar 6a (strain ATCC BAA-680 / CLIP 11262).